A 185-amino-acid polypeptide reads, in one-letter code: Capsid protein (185 aa).

The disordered stretch occupies residues 136 to 185 (NAPILSTLPETTVVRRRDRGRSPRRRTPSPRRRRSQSPRRRRSQSRESQC). Over residues 149–178 (VRRRDRGRSPRRRTPSPRRRRSQSPRRRRS) the composition is skewed to basic residues. Residues Ser-157, Ser-164, and Ser-172 each carry the phosphoserine; by host modification. One copy of the 1; half-length repeat lies at 157-163 (SPRRRTP). The interval 157–179 (SPRRRTPSPRRRRSQSPRRRRSQ) is 3 X 8 AA repeats of S-P-R-R-R-[PR]-S-Q. The Bipartite nuclear localization signal signature appears at 160–177 (RRTPSPRRRRSQSPRRRR). 2 tandem repeats follow at residues 164–171 (SPRRRRSQ) and 172–179 (SPRRRRSQ). Positions 179-185 (QSRESQC) are RNA binding.

This sequence belongs to the orthohepadnavirus core antigen family. Homodimerizes, then multimerizes. Interacts with cytosol exposed regions of viral L glycoprotein present in the reticulum-to-Golgi compartment. Interacts with human FLNB. Phosphorylated form interacts with host importin alpha; this interaction depends on the exposure of the NLS, which itself depends upon genome maturation and/or phosphorylation of the capsid protein. Interacts with host NUP153. In terms of processing, phosphorylated by host SRPK1, SRPK2, and maybe protein kinase C or GAPDH. Phosphorylation is critical for pregenomic RNA packaging. Protein kinase C phosphorylation is stimulated by HBx protein and may play a role in transport of the viral genome to the nucleus at the late step during the viral replication cycle.

The protein localises to the virion. It is found in the host cytoplasm. Its function is as follows. Self assembles to form an icosahedral capsid. Most capsids appear to be large particles with an icosahedral symmetry of T=4 and consist of 240 copies of capsid protein, though a fraction forms smaller T=3 particles consisting of 180 capsid proteins. Entering capsids are transported along microtubules to the nucleus. Phosphorylation of the capsid is thought to induce exposure of nuclear localization signal in the C-terminal portion of the capsid protein that allows binding to the nuclear pore complex via the importin (karyopherin-) alpha and beta. Capsids are imported in intact form through the nuclear pore into the nuclear basket, where it probably binds NUP153. Only capsids that contain the mature viral genome can release the viral DNA and capsid protein into the nucleoplasm. Immature capsids get stuck in the basket. Capsids encapsulate the pre-genomic RNA and the P protein. Pre-genomic RNA is reverse-transcribed into DNA while the capsid is still in the cytoplasm. The capsid can then either be directed to the nucleus, providing more genomes for transcription, or bud through the endoplasmic reticulum to provide new virions. This is Capsid protein from Homo sapiens (Human).